A 378-amino-acid chain; its full sequence is Quinolinate synthase (378 aa).

2 residues coordinate iminosuccinate: His-59 and Ser-80. Residue Cys-125 coordinates [4Fe-4S] cluster. Iminosuccinate is bound by residues 151–153 (YAN) and Ser-168. [4Fe-4S] cluster is bound at residue Cys-212. Iminosuccinate-binding positions include 238–240 (HPE) and Thr-255. [4Fe-4S] cluster is bound at residue Cys-309.

It belongs to the quinolinate synthase family. Type 1 subfamily. Requires [4Fe-4S] cluster as cofactor.

The protein localises to the cytoplasm. The enzyme catalyses iminosuccinate + dihydroxyacetone phosphate = quinolinate + phosphate + 2 H2O + H(+). It participates in cofactor biosynthesis; NAD(+) biosynthesis; quinolinate from iminoaspartate: step 1/1. Functionally, catalyzes the condensation of iminoaspartate with dihydroxyacetone phosphate to form quinolinate. The chain is Quinolinate synthase from Burkholderia thailandensis (strain ATCC 700388 / DSM 13276 / CCUG 48851 / CIP 106301 / E264).